The sequence spans 251 residues: WUSCHEL-related homeobox 4 (251 aa).

Disordered regions lie at residues 1–21 (MKVH…DSTS) and 33–93 (LAPK…RWNP). Residues 11–21 (SSSWDQHDSTS) show a composition bias toward low complexity. A compositionally biased stretch (basic and acidic residues) spans 71–83 (KFEHKRDPPHQLE). Residues 86-150 (PGGTRWNPTQ…NHKARERQKQ (65 aa)) constitute a DNA-binding region (homeobox; WUS-type).

This sequence belongs to the WUS homeobox family. As to expression, expressed in the vasculature of the whole plant (roots, hypocotyls, cotyledons and leaves), trichomes and stomata. Expresse in the developing vascular bundles of root and shoot lateral organs.

It localises to the nucleus. Functionally, promotes differentiation and/or maintenance of the vascular procambium, the initial cells of the developing vasculature. Part of the TDIF-TDR-WOX4 signaling pathway that plays a crucial role in the maintenance of the vascular meristem organization during secondary growth. Is required for promoting the proliferation of procambial/cambial stem cells but not for repressing their commitment to xylem differentiation in response to the TDIF signal. Acts redundantly with WOX14 downstream of the TDR/PXY receptor kinase to regulate procambial cell proliferation and differentiation in vascular tissue, independently of any role in vascular. Acts as a cambium regulator in the inflorescence stem. Is required for auxin-dependent cambium stimulation in the inflorescence stem. This chain is WUSCHEL-related homeobox 4 (WOX4), found in Arabidopsis thaliana (Mouse-ear cress).